A 745-amino-acid chain; its full sequence is 5-methyltetrahydropteroyltriglutamate--homocysteine methyltransferase (745 aa).

Residues 16–19 and lysine 110 contribute to the 5-methyltetrahydropteroyltri-L-glutamate site; that span reads REWK. Residues 420–422 and glutamate 473 contribute to the L-homocysteine site; that span reads IGS. L-methionine-binding positions include 420 to 422 and glutamate 473; that span reads IGS. 5-methyltetrahydropteroyltri-L-glutamate is bound at residue tryptophan 550. Position 588 (aspartate 588) interacts with L-homocysteine. Residue aspartate 588 participates in L-methionine binding. Glutamate 594 is a binding site for 5-methyltetrahydropteroyltri-L-glutamate. The Zn(2+) site is built by histidine 630, cysteine 632, and glutamate 654. The active-site Proton donor is histidine 683. Cysteine 715 is a Zn(2+) binding site.

The protein belongs to the vitamin-B12 independent methionine synthase family. It depends on Zn(2+) as a cofactor.

It carries out the reaction 5-methyltetrahydropteroyltri-L-glutamate + L-homocysteine = tetrahydropteroyltri-L-glutamate + L-methionine. It functions in the pathway amino-acid biosynthesis; L-methionine biosynthesis via de novo pathway; L-methionine from L-homocysteine (MetE route): step 1/1. Catalyzes the transfer of a methyl group from 5-methyltetrahydrofolate to homocysteine resulting in methionine formation. The chain is 5-methyltetrahydropteroyltriglutamate--homocysteine methyltransferase from Streptococcus agalactiae serotype III (strain NEM316).